Reading from the N-terminus, the 240-residue chain is Small ribosomal subunit protein uS3 (240 aa).

A KH type-2 domain is found at 21-92; the sequence is LNEFFTRELA…TIVLYAERVQ (72 aa). Residues Thr-44 and Thr-70 each carry the phosphothreonine modification. Phosphoserine is present on Ser-97. Lys-106 participates in a covalent cross-link: Glycyl lysine isopeptide (Lys-Gly) (interchain with G-Cter in ubiquitin). Ser-129 is modified (phosphoserine). Residues Lys-132 and Lys-141 each participate in a glycyl lysine isopeptide (Lys-Gly) (interchain with G-Cter in ubiquitin) cross-link. An Omega-N-methylarginine; by SFM1 modification is found at Arg-146. Glycyl lysine isopeptide (Lys-Gly) (interchain with G-Cter in ubiquitin) cross-links involve residues Lys-151, Lys-200, and Lys-212. The tract at residues 212-240 is disordered; sequence KEEEPILAPSVKDYRPAEETEAQAEPVEA. Position 221 is a phosphoserine (Ser-221). Residues 230-240 show a composition bias toward acidic residues; the sequence is ETEAQAEPVEA. The residue at position 231 (Thr-231) is a Phosphothreonine.

This sequence belongs to the universal ribosomal protein uS3 family. As to quaternary structure, component of the small ribosomal subunit (SSU). Mature yeast ribosomes consist of a small (40S) and a large (60S) subunit. The 40S small subunit contains 1 molecule of ribosomal RNA (18S rRNA) and 33 different proteins (encoded by 57 genes). The large 60S subunit contains 3 rRNA molecules (25S, 5.8S and 5S rRNA) and 46 different proteins (encoded by 81 genes). Post-translationally, ubiquitinated at Lys-212 in response to stalled ribosomes. Ubiquitination leads to activation of the No-Go Decay (NGD) pathway and degradation of non-functional 18S rRNA: first monoubiquitinated at Lys-212 by MAG2, followed by formation of 'Lys-63'-linked polyubiquitin chains on monoubiquitin by HEL2 and RSP5.

Its subcellular location is the cytoplasm. Component of the ribosome, a large ribonucleoprotein complex responsible for the synthesis of proteins in the cell. The small ribosomal subunit (SSU) binds messenger RNAs (mRNAs) and translates the encoded message by selecting cognate aminoacyl-transfer RNA (tRNA) molecules. The large subunit (LSU) contains the ribosomal catalytic site termed the peptidyl transferase center (PTC), which catalyzes the formation of peptide bonds, thereby polymerizing the amino acids delivered by tRNAs into a polypeptide chain. The nascent polypeptides leave the ribosome through a tunnel in the LSU and interact with protein factors that function in enzymatic processing, targeting, and the membrane insertion of nascent chains at the exit of the ribosomal tunnel. This Saccharomyces cerevisiae (strain ATCC 204508 / S288c) (Baker's yeast) protein is Small ribosomal subunit protein uS3.